Consider the following 470-residue polypeptide: UTP--glucose-1-phosphate uridylyltransferase 1 (470 aa).

Position 2 is an N-acetylalanine (A2). UTP is bound by residues 86–89, K100, Q163, and G192; that span reads LNGG. 88–89 is a binding site for substrate; it reads GG. Substrate is bound by residues H193 and 221-223; that span reads NSD. UTP-binding residues include D223 and K361.

It belongs to the UDPGP type 1 family. In terms of tissue distribution, expressed in roots, rosette leaves, cauline leaves, stems, flowers and siliques.

Its subcellular location is the cytoplasm. It carries out the reaction alpha-D-glucose 1-phosphate + UTP + H(+) = UDP-alpha-D-glucose + diphosphate. In terms of biological role, converts glucose 1-phosphate to UDP-glucose, which is the major glycosyl donor for polysaccharides. Acts redundantly with UGP2 and is essential for the synthesis of sucrose, starch and cell wall, and callose deposition. Involved in the regulation of the programmed cell death (PCD) induced by the fungal toxin fumonisin B1 (FB1). In Arabidopsis thaliana (Mouse-ear cress), this protein is UTP--glucose-1-phosphate uridylyltransferase 1.